Reading from the N-terminus, the 396-residue chain is Lysophospholipid transporter LplT (396 aa).

Residues methionine 1–lysine 17 are Periplasmic-facing. Residues alanine 18–leucine 38 form a helical membrane-spanning segment. Residues alanine 39–proline 52 lie on the Cytoplasmic side of the membrane. Residues isoleucine 53–alanine 73 form a helical membrane-spanning segment. At aspartate 74–leucine 90 the chain is on the periplasmic side. Residues leucine 91–valine 111 form a helical membrane-spanning segment. At glycine 112–alanine 144 the chain is on the cytoplasmic side. Residues isoleucine 145–valine 165 traverse the membrane as a helical segment. Residue alanine 166 is a topological domain, periplasmic. The helical transmembrane segment at leucine 167–leucine 187 threads the bilayer. Residues alanine 188–serine 225 lie on the Cytoplasmic side of the membrane. The helical transmembrane segment at leucine 226–leucine 246 threads the bilayer. Over glycine 247–threonine 255 the chain is Periplasmic. The chain crosses the membrane as a helical span at residues tyrosine 256 to valine 276. The Cytoplasmic portion of the chain corresponds to threonine 277–glutamate 279. The helical transmembrane segment at threonine 280–leucine 300 threads the bilayer. The Periplasmic segment spans residues glutamine 301–glutamate 303. A helical membrane pass occupies residues leucine 304 to proline 324. Residues leucine 325 to alanine 342 are Cytoplasmic-facing. A helical membrane pass occupies residues isoleucine 343–leucine 363. Topologically, residues alanine 364–valine 365 are periplasmic. A helical membrane pass occupies residues methionine 366–isoleucine 386. Topologically, residues threonine 387 to histidine 396 are cytoplasmic.

The protein belongs to the major facilitator superfamily. LplT (TC 2.A.1.42) family.

The protein localises to the cell inner membrane. Catalyzes the facilitated diffusion of 2-acyl-glycero-3-phosphoethanolamine (2-acyl-GPE) into the cell. The polypeptide is Lysophospholipid transporter LplT (Shigella flexneri).